Consider the following 341-residue polypeptide: Probable electron transfer flavoprotein subunit alpha, mitochondrial (341 aa).

Leucine 285–aspartate 313 is a binding site for FAD.

It belongs to the ETF alpha-subunit/FixB family. As to quaternary structure, heterodimer of an alpha and a beta subunit. Requires FAD as cofactor.

Its subcellular location is the mitochondrion matrix. Its function is as follows. The electron transfer flavoprotein serves as a specific electron acceptor for several dehydrogenases, including five acyl-CoA dehydrogenases, glutaryl-CoA and sarcosine dehydrogenase. It transfers the electrons to the main mitochondrial respiratory chain via ETF-ubiquinone oxidoreductase (ETF dehydrogenase). In Schizosaccharomyces pombe (strain 972 / ATCC 24843) (Fission yeast), this protein is Probable electron transfer flavoprotein subunit alpha, mitochondrial.